The sequence spans 788 residues: Integrin beta-6 (788 aa).

The signal sequence occupies residues 1–21; the sequence is MGIELLCLFFLFLGRNDHVQG. The PSI domain maps to 22 to 71; that stretch reads GCALGGAETCEDCLLIGPQCAWCSQENFTYLSGVGERCDTPANLLAKGCQ. The Extracellular portion of the chain corresponds to 22 to 709; the sequence is GCALGGAETC…KDCPKPPNSP (688 aa). Disulfide bonds link Cys23–Cys41, Cys31–Cys454, Cys34–Cys59, Cys44–Cys70, Cys197–Cys204, Cys252–Cys293, Cys394–Cys406, Cys426–Cys452, Cys456–Cys476, Cys467–Cys479, Cys481–Cys490, Cys492–Cys519, Cys502–Cys517, Cys511–Cys522, Cys524–Cys537, Cys539–Cys560, Cys544–Cys558, Cys552–Cys563, Cys565–Cys574, Cys576–Cys599, Cys583–Cys597, Cys591–Cys602, Cys604–Cys614, Cys617–Cys620, Cys624–Cys670, Cys630–Cys649, Cys633–Cys645, and Cys678–Cys702. N-linked (GlcNAc...) asparagine glycans are attached at residues Asn48 and Asn97. The region spanning 131-371 is the VWFA domain; sequence YPVDLYYLMD…QLIISAYEEL (241 aa). Residues Asp140, Ser142, and Ser144 each coordinate Mg(2+). 4 residues coordinate Ca(2+): Ser144, Asp147, Asp148, and Glu179. Asn235, Asp237, Pro239, and Glu240 together coordinate Ca(2+). Residue Glu240 coordinates Mg(2+). N-linked (GlcNAc...) asparagine glycosylation is present at Asn260. Residues Asp271 and Lys355 each coordinate Ca(2+). N-linked (GlcNAc...) asparagine glycosylation occurs at Asn387. Asn418 carries N-linked (GlcNAc...) asparagine glycosylation. I-EGF domains lie at 456 to 491, 492 to 538, 539 to 575, and 576 to 615; these read CQKE…PHCE, CGED…PYCQ, CDDF…EYCN, and CTTS…LTCE. Residues Asn463 and Asn471 are each glycosylated (N-linked (GlcNAc...) asparagine). The helical transmembrane segment at 710 to 730 threads the bilayer; sequence MIMLGVSLAILLIGVVLLCIW. Positions 731 to 758 are interaction with HAX1; that stretch reads KLLVSFHDRKEVAKFEAERSKAKWQTGT. The Cytoplasmic portion of the chain corresponds to 731–788; it reads KLLVSFHDRKEVAKFEAERSKAKWQTGTNPLYRGSTSTFKNVTYKHREKQKVDLSMDG.

It belongs to the integrin beta chain family. Heterodimer of an alpha and a beta subunit. Interacts with FLNB. Interacts with HAX1. ITGAV:ITGB6 interacts with FBN1. ITGAV:ITGB6 interacts with TGFB1.

It localises to the cell membrane. The protein localises to the cell junction. It is found in the focal adhesion. In terms of biological role, integrin alpha-V:beta-6 (ITGAV:ITGB6) is a receptor for fibronectin and cytotactin. It recognizes the sequence R-G-D in its ligands. ITGAV:ITGB6 acts as a receptor for fibrillin-1 (FBN1) and mediates R-G-D-dependent cell adhesion to FBN1. Integrin alpha-V:beta-6 (ITGAV:ITGB6) mediates R-G-D-dependent release of transforming growth factor beta-1 (TGF-beta-1) from regulatory Latency-associated peptide (LAP), thereby playing a key role in TGF-beta-1 activation. The chain is Integrin beta-6 (ITGB6) from Sus scrofa (Pig).